A 206-amino-acid polypeptide reads, in one-letter code: Adenylyl-sulfate kinase (206 aa).

31–38 is a binding site for ATP; sequence GLSASGKS. The active-site Phosphoserine intermediate is Ser105.

Belongs to the APS kinase family.

The enzyme catalyses adenosine 5'-phosphosulfate + ATP = 3'-phosphoadenylyl sulfate + ADP + H(+). It functions in the pathway sulfur metabolism; hydrogen sulfide biosynthesis; sulfite from sulfate: step 2/3. Functionally, catalyzes the synthesis of activated sulfate. The chain is Adenylyl-sulfate kinase (sD) from Emericella nidulans (strain FGSC A4 / ATCC 38163 / CBS 112.46 / NRRL 194 / M139) (Aspergillus nidulans).